Reading from the N-terminus, the 432-residue chain is PC-esterase domain-containing protein 1B (432 aa).

Disordered stretches follow at residues 264 to 293 (EWIK…LSPP) and 398 to 432 (RGFG…PRPQ).

The protein belongs to the PC-esterase family.

This Homo sapiens (Human) protein is PC-esterase domain-containing protein 1B.